A 409-amino-acid polypeptide reads, in one-letter code: MAREKFERSKPHVNIGTIGHVDHGKTTLTAAISTVLAANSSGPGKKFDEIDSAPEERARGITINTAHVEYETAARHYAHVDCPGHADYVKNMITGAAQMDGAILVCSAADGPMPQTREHILLAKQVGVPHIVVFLNKADMVDDEELLELVELEVQELLSKYDFPGDEIPFVAGSALLALETAVGKPDIGRGEDKWVDTIFELMDKIDEYIPTPERETDKSFLMAVEDVFSITGRGTVATGRIERGQVKVGDTIEIIGLRETRTTTITGLEMFQKSLEEALAGDNVGILVRGIQKTDIERGMVLAAPGSITPHTKFEGEVYVLTKEEGGRHTPFFTGYRPQFYVRTTDVTGTIAQFTADDGSAAEMVMPGDRIKMTAQLIHPIAIEKGMRFAIREGGRTVGAGVVSKILE.

A tr-type G domain is found at 10–214 (KPHVNIGTIG…KIDEYIPTPE (205 aa)). Positions 19 to 26 (GHVDHGKT) are G1. 19–26 (GHVDHGKT) contributes to the GTP binding site. A Mg(2+)-binding site is contributed by T26. A G2 region spans residues 60–64 (GITIN). The tract at residues 81–84 (DCPG) is G3. GTP-binding positions include 81–85 (DCPGH) and 136–139 (NKAD). The tract at residues 136–139 (NKAD) is G4. Residues 174 to 176 (SAL) are G5.

Belongs to the TRAFAC class translation factor GTPase superfamily. Classic translation factor GTPase family. EF-Tu/EF-1A subfamily.

Its subcellular location is the plastid. It localises to the chloroplast. It carries out the reaction GTP + H2O = GDP + phosphate + H(+). Functionally, GTP hydrolase that promotes the GTP-dependent binding of aminoacyl-tRNA to the A-site of ribosomes during protein biosynthesis. This is Elongation factor Tu, chloroplastic (tufA) from Rhodomonas salina (Cryptomonas salina).